A 417-amino-acid polypeptide reads, in one-letter code: Adenosylhomocysteinase (417 aa).

3 residues coordinate substrate: Thr53, Asp125, and Glu149. 150–152 (TTT) lines the NAD(+) pocket. Residues Lys179 and Asp183 each coordinate substrate. Residues Asn184, 213–218 (GYGWVG), Glu236, Asn271, 292–294 (AGH), and Asn339 each bind NAD(+).

Belongs to the adenosylhomocysteinase family. It depends on NAD(+) as a cofactor.

The protein localises to the cytoplasm. The catalysed reaction is S-adenosyl-L-homocysteine + H2O = L-homocysteine + adenosine. It participates in amino-acid biosynthesis; L-homocysteine biosynthesis; L-homocysteine from S-adenosyl-L-homocysteine: step 1/1. May play a key role in the regulation of the intracellular concentration of adenosylhomocysteine. In Saccharolobus solfataricus (strain ATCC 35092 / DSM 1617 / JCM 11322 / P2) (Sulfolobus solfataricus), this protein is Adenosylhomocysteinase.